Here is a 235-residue protein sequence, read N- to C-terminus: Riboflavin kinase (235 aa).

Residues threonine 45 and asparagine 47 each contribute to the Mg(2+) site. Glutamate 140 serves as the catalytic Nucleophile.

The protein belongs to the flavokinase family. Zn(2+) serves as cofactor. The cofactor is Mg(2+).

The enzyme catalyses riboflavin + ATP = FMN + ADP + H(+). Its pathway is cofactor biosynthesis; FMN biosynthesis; FMN from riboflavin (ATP route): step 1/1. Functionally, catalyzes the phosphorylation of riboflavin (vitamin B2) to form flavin mononucleotide (FMN) coenzyme. The chain is Riboflavin kinase (FMN1) from Chaetomium globosum (strain ATCC 6205 / CBS 148.51 / DSM 1962 / NBRC 6347 / NRRL 1970) (Soil fungus).